Consider the following 437-residue polypeptide: Enolase (437 aa).

Residues H160 and E169 each coordinate substrate. E212 functions as the Proton donor in the catalytic mechanism. Positions 247, 296, and 321 each coordinate Mg(2+). E296 and D321 together coordinate substrate. K346 functions as the Proton acceptor in the catalytic mechanism. Residues 373-376 and K397 each bind substrate; that span reads SHRS.

This sequence belongs to the enolase family. In terms of assembly, homodimer. Requires Mg(2+) as cofactor.

The protein localises to the cytoplasm. It catalyses the reaction (2R)-2-phosphoglycerate = phosphoenolpyruvate + H2O. It functions in the pathway carbohydrate degradation; glycolysis; pyruvate from D-glyceraldehyde 3-phosphate: step 4/5. This Eremothecium gossypii (strain ATCC 10895 / CBS 109.51 / FGSC 9923 / NRRL Y-1056) (Yeast) protein is Enolase (ENO).